A 785-amino-acid polypeptide reads, in one-letter code: Sexual differentiation process protein isp4 (785 aa).

The tract at residues 1–28 is disordered; that stretch reads MIGSINESPIEEHMNDSPSTKEKADSVD. Over residues 10–26 the composition is skewed to basic and acidic residues; the sequence is IEEHMNDSPSTKEKADS. 16 consecutive transmembrane segments (helical) span residues 94-114, 121-141, 167-187, 196-216, 264-284, 339-359, 413-433, 461-481, 490-510, 512-532, 537-557, 572-592, 611-631, 642-662, 683-703, and 732-752; these read MWTI…FFSL, LSVL…DLIF, LIVV…IILA, FGFG…YGLA, FFLY…YIFQ, LMNI…ALNF, ALAF…VILY, VPFY…MGTI, WWVI…IGIV, AITN…GYMY, LAMM…LAFA, IMFY…IGVL, YTCP…VIGP, TGLQ…WALW, GYIP…GLFF, and LSVI…PDWW.

This sequence belongs to the oligopeptide OPT transporter family.

The protein resides in the endoplasmic reticulum membrane. The protein is Sexual differentiation process protein isp4 (isp4) of Schizosaccharomyces pombe (strain 972 / ATCC 24843) (Fission yeast).